Here is a 240-residue protein sequence, read N- to C-terminus: NAD(P)H-quinone oxidoreductase subunit K (240 aa).

The [4Fe-4S] cluster site is built by Cys-55, Cys-56, Cys-120, and Cys-151.

It belongs to the complex I 20 kDa subunit family. In terms of assembly, NDH-1 can be composed of about 15 different subunits; different subcomplexes with different compositions have been identified which probably have different functions. The cofactor is [4Fe-4S] cluster.

It is found in the cellular thylakoid membrane. It carries out the reaction a plastoquinone + NADH + (n+1) H(+)(in) = a plastoquinol + NAD(+) + n H(+)(out). The enzyme catalyses a plastoquinone + NADPH + (n+1) H(+)(in) = a plastoquinol + NADP(+) + n H(+)(out). In terms of biological role, NDH-1 shuttles electrons from an unknown electron donor, via FMN and iron-sulfur (Fe-S) centers, to quinones in the respiratory and/or the photosynthetic chain. The immediate electron acceptor for the enzyme in this species is believed to be plastoquinone. Couples the redox reaction to proton translocation, and thus conserves the redox energy in a proton gradient. Cyanobacterial NDH-1 also plays a role in inorganic carbon-concentration. In Trichodesmium erythraeum (strain IMS101), this protein is NAD(P)H-quinone oxidoreductase subunit K.